The primary structure comprises 746 residues: MVNSKASSFRFSFFIHNSAFIILFPPSFSRLLFIPAIGYLQDHLQSLSTSRLMSEERLVSGNIIDYPAPVYSYRRRVTREVPFGTIFLGGYLPIRVESMITAHTMDTAASVEQCRRLYEAGCEIIRLTVPTEKDAENLKNIREQLRRDGIDTPLVADIHFSAKAAMKAVEFVENIRINPGNYATGAKFSSKDYTDDEYRAELDKVREEFTPLVRKARSLGVSMRIGTNHGSLSDRIVSRYGNSPEGMVEAALEFSRICEDEGYYDQLFSMKSSNVRVMIQAYRLLVARADAELRYAYPLHLGVTEAGDGDEGRIKSAMGIGALLEDGLGDTIRVSLTEDPVNEVPVGFAIVKKYNDMLLVRGDRAHLPVKHVIEHERKSAGHVQLPFEPFSYSRRPSISIDGAGIPVGGDALPGVETAAHAPITDTESLRDEILARLDPGKPEDAIRSELVSVGVGSAEDISLLKALLDSLGNLREKIVVSTADTSIVPALLPLCGRVRLDIVEGETLGTGLIESLHDRNAAIEFCFIHEKSSENVPAEVLVRLAAKLKARGLQRVMLSIVSDAPLYSTRKLALELKKAGLDYPIAVRYRRLDGERSGVLIQSAIQAGTLFCDGIGDLIALETNMPASEEVSLCFNILQAARIRMSKTEFISCPGCGRTYFELEKTTALIKQRVSHLKGLKIGIMGCIVNGPGEMADADFGYVGSGKGRVSLYVGKECVEENIPEAEALERLIELIRQNGKWVDPV.

Residues Cys653, Cys656, Cys687, and Glu694 each coordinate [4Fe-4S] cluster.

The protein belongs to the IspG family. [4Fe-4S] cluster is required as a cofactor.

It catalyses the reaction (2E)-4-hydroxy-3-methylbut-2-enyl diphosphate + oxidized [flavodoxin] + H2O + 2 H(+) = 2-C-methyl-D-erythritol 2,4-cyclic diphosphate + reduced [flavodoxin]. Its pathway is isoprenoid biosynthesis; isopentenyl diphosphate biosynthesis via DXP pathway; isopentenyl diphosphate from 1-deoxy-D-xylulose 5-phosphate: step 5/6. In terms of biological role, converts 2C-methyl-D-erythritol 2,4-cyclodiphosphate (ME-2,4cPP) into 1-hydroxy-2-methyl-2-(E)-butenyl 4-diphosphate. This chain is 4-hydroxy-3-methylbut-2-en-1-yl diphosphate synthase (flavodoxin), found in Chlorobaculum tepidum (strain ATCC 49652 / DSM 12025 / NBRC 103806 / TLS) (Chlorobium tepidum).